The primary structure comprises 485 residues: MDKAVSKTNRMAAEISQHGVKEYLAQQQHKGLLRFLTCGSVDDGKSTLIGRLLHDSAQIYEDQLASLKNDSAKMGTTGEAIDLALLVDGLQAEREQGITIDVAYRYFSSDKRKFIIADTPGHEQYTRNMATGASTCDLAVILVDARYGVQTQTKRHAFIASLLGIRHFVVAINKMDLLGFDEQVFNRIRNDFSEFVKGFGELDIHFVPLSALNGDNVVEPSLHTPWYQGGTLLELLETIDTQRELSALPARFPVQYVSRPNLDFRGFAGTLASGVIKVGDQVVALPSGKRSKVERIVTFDGDLPEVTAGQAVTITLEDEIDISRGDLLALPDSAPQVANQIIADLVWMDEKPLQLGQLYDIKVAGKKTQASVTAIDYVVDVNTLARSSAASVEGEGLGLNAIARVTLELTEDIVFDAYSLVRDTGGMILIDRLSNATVAAVMVVSGQHVSKQVSSPFSAFELEFNALVRKHFPHWQAIDISKLGA.

A tr-type G domain is found at 30–243 (KGLLRFLTCG…ELLETIDTQR (214 aa)). The segment at 39–46 (GSVDDGKS) is G1. Residue 39-46 (GSVDDGKS) coordinates GTP. Positions 97-101 (GITID) are G2. The G3 stretch occupies residues 118–121 (DTPG). Residues 118 to 122 (DTPGH) and 173 to 176 (NKMD) each bind GTP. The interval 173–176 (NKMD) is G4. Residues 210-212 (SAL) are G5.

It belongs to the TRAFAC class translation factor GTPase superfamily. Classic translation factor GTPase family. CysN/NodQ subfamily. In terms of assembly, heterodimer composed of CysD, the smaller subunit, and CysN.

It carries out the reaction sulfate + ATP + H(+) = adenosine 5'-phosphosulfate + diphosphate. The protein operates within sulfur metabolism; hydrogen sulfide biosynthesis; sulfite from sulfate: step 1/3. With CysD forms the ATP sulfurylase (ATPS) that catalyzes the adenylation of sulfate producing adenosine 5'-phosphosulfate (APS) and diphosphate, the first enzymatic step in sulfur assimilation pathway. APS synthesis involves the formation of a high-energy phosphoric-sulfuric acid anhydride bond driven by GTP hydrolysis by CysN coupled to ATP hydrolysis by CysD. The polypeptide is Sulfate adenylyltransferase subunit 1 (Shewanella oneidensis (strain ATCC 700550 / JCM 31522 / CIP 106686 / LMG 19005 / NCIMB 14063 / MR-1)).